Here is a 145-residue protein sequence, read N- to C-terminus: Putative antiporter subunit mnhG2 (145 aa).

3 helical membrane passes run 11 to 31 (IAAVMLLLGSFIALISAIGIV), 51 to 71 (VLLTLIGVLIYFIVNTGFFSV), and 72 to 92 (RLLLSLVFINLTSPVGMHLVA).

It belongs to the CPA3 antiporters (TC 2.A.63) subunit G family. In terms of assembly, may form a heterooligomeric complex that consists of seven subunits: mnhA2, mnhB2, mnhC2, mnhD2, mnhE2, mnhF2 and mnhG2.

The protein resides in the cell membrane. The polypeptide is Putative antiporter subunit mnhG2 (mnhG2) (Staphylococcus aureus (strain MRSA252)).